We begin with the raw amino-acid sequence, 328 residues long: H-2 class I histocompatibility antigen, K-Q alpha chain (328 aa).

The interval 1-71 (PRFISVGYVD…LLRYYNQSAG (71 aa)) is alpha-1. The Extracellular segment spans residues 1-265 (PRFISVGYVD…EPPPSAVSNT (265 aa)). A glycan (N-linked (GlcNAc...) asparagine) is linked at Asn67. Residues 72–163 (GSHTIQRMYG…KNGNATLLRT (92 aa)) are alpha-2. Cys82 and Cys145 are oxidised to a cystine. N-linked (GlcNAc...) asparagine glycosylation occurs at Asn157. The alpha-3 stretch occupies residues 164-255 (DSPKAHVTHH…GLPKPLTLRW (92 aa)). Residues 166–252 (PKAHVTHHSR…YHQGLPKPLT (87 aa)) enclose the Ig-like C1-type domain. Residues Cys184 and Cys240 are joined by a disulfide bond. Residues 256–265 (EPPPSAVSNT) form a connecting peptide region. Residues 266–289 (VIIAVLVVLGAAIVTGAVVAFVMM) traverse the membrane as a helical segment. Residues 290 to 328 (RRRNTGGKGGDYALAPGSQTSDLSLPDCKVMVHDPHSLA) are Cytoplasmic-facing. Phosphoserine occurs at positions 310 and 313.

This sequence belongs to the MHC class I family. As to quaternary structure, heterodimer of an alpha chain and a beta chain (beta-2-microglobulin).

The protein localises to the membrane. Involved in the presentation of foreign antigens to the immune system. This is H-2 class I histocompatibility antigen, K-Q alpha chain (H2-K1) from Mus musculus (Mouse).